Here is a 748-residue protein sequence, read N- to C-terminus: Phytochrome-like protein Cph1 (748 aa).

The PAS domain maps to 19–86 (AIHTAHLIQP…IQSRLTAGQI (68 aa)). Positions 87–510 (SSLNPSKLWA…KKAIVNLILR (424 aa)) are chromophore binding domain. Residues 152–320 (NLRDFYDVIV…VVFSNISAQE (169 aa)) form the GAF domain. Residue Cys-259 coordinates a tetrapyrrole. The 214-residue stretch at 535–748 (IASHDLQEPL…TFYFSIPIGN (214 aa)) folds into the Histidine kinase domain. A Phosphohistidine; by autocatalysis modification is found at His-538.

The protein in the N-terminal section; belongs to the phytochrome family. Homodimer. Contains one covalently linked tetrapyrrole chromophore.

The enzyme catalyses ATP + protein L-histidine = ADP + protein N-phospho-L-histidine.. In terms of biological role, regulatory photoreceptor which exists in two forms that are reversibly interconvertible by light: the R form that absorbs maximally in the red region of the spectrum and the FR form that absorbs maximally in the far-red region. Also has a slight blue shift for the far-red maximum. Forms a two-component system with the Rrcp1 response regulator. This Synechocystis sp. (strain ATCC 27184 / PCC 6803 / Kazusa) protein is Phytochrome-like protein Cph1 (cph1).